A 937-amino-acid polypeptide reads, in one-letter code: Protocadherin alpha-7 (937 aa).

An N-terminal signal peptide occupies residues 1 to 29; the sequence is MVCPNGYDPGGRHLLLFIIILAAWEAGRG. Cadherin domains are found at residues 30–133, 134–242, 243–350, 351–455, 456–565, and 581–678; these read QLHY…PPVF, PATQ…APVF, DRTL…APQL, TLTS…APAF, AQPE…APAL, and VPRS…APKA. Residues 30–697 are Extracellular-facing; sequence QLHYSVPEEA…GPETELVDVN (668 aa). A disulfide bridge links Cys96 with Cys102. Asn254 and Asn265 each carry an N-linked (GlcNAc...) asparagine glycan. Asn548 carries N-linked (GlcNAc...) asparagine glycosylation. Residues 698–718 form a helical membrane-spanning segment; it reads VYLIIAICAVSSLLVLTLLLY. At 719-937 the chain is on the cytoplasmic side; the sequence is TALRCSAPSS…GNSTTDNSDQ (219 aa). 2 disordered regions span residues 756–795 and 817–843; these read QRVCSGEGPPKTDLMAFSPSLPQGPSSTDNPRQPNPDWRY and AGPGGPDQQWPTVSSATPEPEAGEVSP. PXXP repeat units follow at residues 774–777, 786–789, 819–822, 860–863, and 878–881; these read PSLP, PRQP, PGGP, PGNP, and PGSP. Positions 774–881 are 5 X 4 AA repeats of P-X-X-P; it reads PSLPQGPSST…PDKFIIPGSP (108 aa). Over residues 775–787 the composition is skewed to polar residues; it reads SLPQGPSSTDNPR. The disordered stretch occupies residues 888-937; sequence QEPANSQIDKSDFITFGKKEETKKKKKKKKGNKTQEKKEKGNSTTDNSDQ. Residues 896 to 910 show a composition bias toward basic and acidic residues; the sequence is DKSDFITFGKKEETK.

As to quaternary structure, forms homodimers in trans (molecules expressed by two different cells). Forms promiscuous heterodimers in cis (at the plasma membrane of the same cell) with other protocadherins.

The protein localises to the cell membrane. Its function is as follows. Calcium-dependent cell-adhesion protein involved in cells self-recognition and non-self discrimination. Thereby, it is involved in the establishment and maintenance of specific neuronal connections in the brain. This chain is Protocadherin alpha-7, found in Pan troglodytes (Chimpanzee).